The following is a 515-amino-acid chain: MLSLTIKGKARRRKERAFGDRDFLTFSSKTKKTENVNLSFEKGTRFFDRGGMIFGPSPRSARWPIGIAAFGLCLLFLIKNSGSARESAGNNRKEGVHVAAASAPFLVNRAAGSATTTKERIHFKITNASAMAACGMAGSDLFGYIIQVESGVTGTAGLMENNFHGSVQRALFSLRILRSLRVNSLARIQNFWGPSIPSSSPAKTPLPFGLNIFFDSYMWAPDIYEGSPTPVTAFFSIAPERSISANILRVFIYGSYGATLQQIFFFCSIALRLRSTGAMANEGKASSSIGQLDYGGLYFVLVLMWNREGIQSLLIGLFIYASMDDRCFAIVSALRQTRVKYIADLGALAKTNPISAITFSITMFSYAGIPPLAGFCSKFYLFFAALGCGAYFLAPVGVVTSVIGCWAAGRLPRVSQFGDRRQFSVHRTRSLPNQLRHGWECMLRKIGSSLIHQPSVYSISLYESTITTRDEPWFGEFELALGVIGLPVTAHDRILRCSPPVVGTTRAGPGLNSER.

5 helical membrane-spanning segments follow: residues W63 to S83, V250 to A270, F299 to I319, A356 to C376, and F379 to V399.

Belongs to the complex I subunit 2 family.

It localises to the mitochondrion inner membrane. The enzyme catalyses a ubiquinone + NADH + 5 H(+)(in) = a ubiquinol + NAD(+) + 4 H(+)(out). Functionally, core subunit of the mitochondrial membrane respiratory chain NADH dehydrogenase (Complex I) that is believed to belong to the minimal assembly required for catalysis. Complex I functions in the transfer of electrons from NADH to the respiratory chain. The immediate electron acceptor for the enzyme is believed to be ubiquinone. In Beta vulgaris (Sugar beet), this protein is NADH-ubiquinone oxidoreductase chain 2 (ND2).